The chain runs to 180 residues: Inosine/xanthosine triphosphatase (180 aa).

8-13 (TTNPAK) is a binding site for substrate. Asp38 lines the Mg(2+) pocket.

This sequence belongs to the YjjX NTPase family. As to quaternary structure, homodimer. Requires Mg(2+) as cofactor. The cofactor is Mn(2+).

The catalysed reaction is XTP + H2O = XDP + phosphate + H(+). It carries out the reaction ITP + H2O = IDP + phosphate + H(+). Its function is as follows. Phosphatase that hydrolyzes non-canonical purine nucleotides such as XTP and ITP to their respective diphosphate derivatives. Probably excludes non-canonical purines from DNA/RNA precursor pool, thus preventing their incorporation into DNA/RNA and avoiding chromosomal lesions. The protein is Inosine/xanthosine triphosphatase of Yersinia pseudotuberculosis serotype O:1b (strain IP 31758).